Here is an 86-residue protein sequence, read N- to C-terminus: Large ribosomal subunit protein bL27 (86 aa).

It belongs to the bacterial ribosomal protein bL27 family.

This chain is Large ribosomal subunit protein bL27, found in Xanthomonas oryzae pv. oryzae (strain PXO99A).